Here is a 376-residue protein sequence, read N- to C-terminus: Fibromodulin (376 aa).

The first 18 residues, 1–18, serve as a signal peptide directing secretion; it reads MQWASILLLRGLCSLSQG. Gln-19 carries the pyrrolidone carboxylic acid modification. 6 positions are modified to sulfotyrosine: Tyr-20, Tyr-38, Tyr-53, Tyr-55, Tyr-63, and Tyr-65. Residues 67-105 enclose the LRRNT domain; the sequence is APPPPEPRDCPQECDCPPNFPTAMYCDNRNLKYLPFVPS. LRR repeat units lie at residues 106-127, 130-143, 156-176, 177-198, 201-222, 224-245, 246-266, and 269-289; these read RMKY…VFDN, GLLW…QITS, HLER…PLPR, SLRE…ALEG, NLTA…MRGL, SLIL…LPSA, LEQL…YFRG, and KLLY…ATNT. Asn-127 carries N-linked (GlcNAc...) (keratan sulfate) asparagine glycosylation. The N-linked (GlcNAc...) (keratan sulfate) asparagine glycan is linked to Asn-166. Residue Asn-201 is glycosylated (N-linked (GlcNAc...) (keratan sulfate) asparagine). An N-linked (GlcNAc...) (keratan sulfate) asparagine glycan is attached at Asn-291. 2 LRR repeats span residues 294-315 and 316-335; these read SLLE…NTNL and ENLY…SFCT. Cysteines 334 and 367 form a disulfide. A glycan (N-linked (GlcNAc...) asparagine) is linked at Asn-341. The LRR 11 repeat unit spans residues 344 to 367; the sequence is KLQVLRLDGNEIKRSAMPVDAPLC.

The protein belongs to the small leucine-rich proteoglycan (SLRP) family. SLRP class II subfamily. As to quaternary structure, binds to type I and type II collagen. In terms of processing, binds keratan sulfate chains.

The protein resides in the secreted. Its subcellular location is the extracellular space. It localises to the extracellular matrix. Affects the rate of fibrils formation. May have a primary role in collagen fibrillogenesis. This is Fibromodulin (Fmod) from Rattus norvegicus (Rat).